A 159-amino-acid polypeptide reads, in one-letter code: Probable epoxidase scpX (159 aa).

An N-terminal signal peptide occupies residues 1 to 25 (MATLIRLLRLLPVASSSAVLMFALD). 2 consecutive transmembrane segments (helical) span residues 59–79 (WVLI…LFIS) and 96–116 (LLFS…IAAI). N124 and N136 each carry an N-linked (GlcNAc...) asparagine glycan. The helical transmembrane segment at 139 to 159 (RALLTDLPAWLCFIAAALKAL) threads the bilayer.

The protein belongs to the epoxidase xenD family.

It is found in the membrane. It participates in mycotoxin biosynthesis. In terms of biological role, probable epoxidase; part of the gene scp cluster that mediates the biosynthesis of a hirsutellone-like compound that has still to be identified. The polypeptide is Probable epoxidase scpX (Mollisia scopiformis (Conifer needle endophyte fungus)).